The following is a 748-amino-acid chain: Catalase-peroxidase (748 aa).

A cross-link (tryptophyl-tyrosyl-methioninium (Trp-Tyr) (with M-255)) is located at residues 96-229 (WHSAGTYRVA…LAAAHMGLIY (134 aa)). His-97 acts as the Proton acceptor in catalysis. The segment at residues 229-255 (YVNPEGPDGNPDPIAAAKDIRTTFGRM) is a cross-link (tryptophyl-tyrosyl-methioninium (Tyr-Met) (with W-96)). Heme b is bound at residue His-270.

Belongs to the peroxidase family. Peroxidase/catalase subfamily. In terms of assembly, homodimer or homotetramer. Heme b serves as cofactor. Formation of the three residue Trp-Tyr-Met cross-link is important for the catalase, but not the peroxidase activity of the enzyme.

The protein localises to the cytoplasm. It carries out the reaction H2O2 + AH2 = A + 2 H2O. The enzyme catalyses 2 H2O2 = O2 + 2 H2O. Its function is as follows. Bifunctional enzyme with both catalase and broad-spectrum peroxidase activity. Plays a crucial role in oxidative stress response during infection. Acts as an antigen and elicits antibody response in P.marneffei-infected AIDS patients, healthy people working in mycological laboratory, and healthy people in an endemic area. This Talaromyces marneffei (Penicillium marneffei) protein is Catalase-peroxidase.